Here is a 241-residue protein sequence, read N- to C-terminus: Biosynthetic peptidoglycan transglycosylase (241 aa).

A helical membrane pass occupies residues 19–39 (AILAVLGVWIAGILLFSVMPV).

This sequence belongs to the glycosyltransferase 51 family.

The protein localises to the cell inner membrane. It carries out the reaction [GlcNAc-(1-&gt;4)-Mur2Ac(oyl-L-Ala-gamma-D-Glu-L-Lys-D-Ala-D-Ala)](n)-di-trans,octa-cis-undecaprenyl diphosphate + beta-D-GlcNAc-(1-&gt;4)-Mur2Ac(oyl-L-Ala-gamma-D-Glu-L-Lys-D-Ala-D-Ala)-di-trans,octa-cis-undecaprenyl diphosphate = [GlcNAc-(1-&gt;4)-Mur2Ac(oyl-L-Ala-gamma-D-Glu-L-Lys-D-Ala-D-Ala)](n+1)-di-trans,octa-cis-undecaprenyl diphosphate + di-trans,octa-cis-undecaprenyl diphosphate + H(+). The protein operates within cell wall biogenesis; peptidoglycan biosynthesis. Peptidoglycan polymerase that catalyzes glycan chain elongation from lipid-linked precursors. The polypeptide is Biosynthetic peptidoglycan transglycosylase (Cronobacter sakazakii (strain ATCC BAA-894) (Enterobacter sakazakii)).